We begin with the raw amino-acid sequence, 145 residues long: uncharacterized protein (145 aa).

Residues 4–24 traverse the membrane as a helical segment; that stretch reads IYMLVALLISSLVLFAGCVQN.

It is found in the membrane. This is an uncharacterized protein from Methanocaldococcus jannaschii (strain ATCC 43067 / DSM 2661 / JAL-1 / JCM 10045 / NBRC 100440) (Methanococcus jannaschii).